Here is a 114-residue protein sequence, read N- to C-terminus: Large ribosomal subunit protein uL22 (114 aa).

It belongs to the universal ribosomal protein uL22 family. In terms of assembly, part of the 50S ribosomal subunit.

Functionally, this protein binds specifically to 23S rRNA; its binding is stimulated by other ribosomal proteins, e.g. L4, L17, and L20. It is important during the early stages of 50S assembly. It makes multiple contacts with different domains of the 23S rRNA in the assembled 50S subunit and ribosome. In terms of biological role, the globular domain of the protein is located near the polypeptide exit tunnel on the outside of the subunit, while an extended beta-hairpin is found that lines the wall of the exit tunnel in the center of the 70S ribosome. This Mycoplasmopsis agalactiae (strain NCTC 10123 / CIP 59.7 / PG2) (Mycoplasma agalactiae) protein is Large ribosomal subunit protein uL22.